The chain runs to 205 residues: MSDIVWHQHSIDKQSRADQKGQNPILLWFTGLSGSGKSTLAGALERALFDAGFHTYLLDGDNVRHGLCKDLGFSADDRDENLRRVGEVAKLMVDAGLVVLSAFISPTREERERVRALFDQGQFIEVHVSTPIEVCEARDPKGLYSKARAGEIKNFTGISAPYETPTAAELTIDTSKGDLATQVSALLDYLAAIQVIDSEKLKKAV.

31–38 (GLSGSGKS) serves as a coordination point for ATP. The active-site Phosphoserine intermediate is serine 105.

Belongs to the APS kinase family.

The catalysed reaction is adenosine 5'-phosphosulfate + ATP = 3'-phosphoadenylyl sulfate + ADP + H(+). Its pathway is sulfur metabolism; hydrogen sulfide biosynthesis; sulfite from sulfate: step 2/3. In terms of biological role, catalyzes the synthesis of activated sulfate. The polypeptide is Adenylyl-sulfate kinase (Shewanella pealeana (strain ATCC 700345 / ANG-SQ1)).